The primary structure comprises 285 residues: HTH-type transcriptional regulator MurR (285 aa).

Residues 1–77 (MLYLTKIRNA…MALIGEYSAS (77 aa)) enclose the HTH rpiR-type domain. A DNA-binding region (H-T-H motif) is located at residues 37-56 (SRKMAKQLGISQSSIVKFAQ). The SIS domain maps to 128–268 (IIEVISKAPF…FVGLVQLNDV (141 aa)).

In terms of assembly, homotetramer.

It participates in amino-sugar metabolism; N-acetylmuramate degradation [regulation]. Its function is as follows. Represses the expression of the murPQ operon involved in the uptake and degradation of N-acetylmuramic acid (MurNAc). Binds to two adjacent inverted repeats within the operator region. MurNAc 6-phosphate, the substrate of MurQ, is the specific inducer that weakens binding of MurR to the operator. This Escherichia coli O9:H4 (strain HS) protein is HTH-type transcriptional regulator MurR.